The primary structure comprises 785 residues: MGSLSTLNLIKTCVTLASSEKLNQPSQCYTISTCMKSSNNPPFNYYQINGRKKMSTAIDSSVNAPPEQKYNSTALEHDTEIIEIEDHIECIRRLLRTAGDGRISVSPYDTAWIALIKDLDGHDSPQFPSSMEWVADNQLPDGSWGDEHFVCVYDRLVNTIACVVALRSWNVHAHKCEKGIKYIKENVHKLEDANEEHMTCGFEVVFPALLQRAQSMGIKGIPYNAPVIEEIYNSREKKLKRIPMEVVHKVATSLLFSLEGLENLEWEKLLKLQSPDGSFLTSPSSTAFAFIHTKDRKCFNFINNIVHTFKGGAPHTYPVDIFGRLWAVDRLQRLGISRFFESEIAEFLSHVHRFWSDEAGVFSGRESVFCDIDDTSMGLRLLRMHGYHVDPNVLKNFKQSDKFSCYGGQMMECSSPIYNLYRASQLQFPGEEILEEANKFAYKFLQEKLESNQILDKWLISNHLSDEIKVGLEMPWYATLPRVETSYYIHHYGGGDDVWIGKTLYRMPEISNDTYRELARLDFRRCQAQHQLEWIYMQRWYESCRMQEFGISRKEVLRAYFLASGTIFEVERAKERVAWARSQIISHMIKSFFNKETTSSDQKQALLTELLFGNISASETEKRELDGVVVATLRQFLEGFDIGTRHQVKAAWDVWLRKVEQGEAHGGADAELCTTTLNTCANQHLSSHPDYNTLSKLTNKICHKLSQIQHQKEMKGGIKAKCSINNKEVDIEMQWLVKLVLEKSGLNRKAKQAFLSIAKTYYYRAYYADQTMDAHIFKVLFEPVV.

Lysine 238 contacts substrate. The Mg(2+) site is built by aspartate 371 and aspartate 373. The DXDD motif signature appears at aspartate 371 to aspartate 374. Substrate is bound at residue lysine 457.

This sequence belongs to the terpene synthase family. It depends on Mg(2+) as a cofactor. As to expression, present in both leaves and flowers, with higher levels in leaves.

The protein localises to the plastid. The protein resides in the chloroplast. The enzyme catalyses (2E,6E,10E)-geranylgeranyl diphosphate = (+)-copalyl diphosphate. It functions in the pathway secondary metabolite biosynthesis; terpenoid biosynthesis. In terms of biological role, involved in the biosynthesis of labdane-type diterpenoid including marrubiin and other labdane-related furanoid diterpenoids with potential applications as anti-diabetics, analgesics or vasorelaxants. Terpene synthase that produces (+)-copalyl diphosphate ((+)-CPP) from geranylgeranyl diphosphate (GGPP). The protein is (+)-copalyl diphosphate synthase 3, chloroplastic of Marrubium vulgare (White horehound).